Consider the following 386-residue polypeptide: Heat-inducible transcription repressor HrcA (386 aa).

It belongs to the HrcA family.

Negative regulator of class I heat shock genes (grpE-dnaK-dnaJ and groELS operons). Prevents heat-shock induction of these operons. In Chlamydia felis (strain Fe/C-56) (Chlamydophila felis), this protein is Heat-inducible transcription repressor HrcA.